A 140-amino-acid chain; its full sequence is MAIERTFSILKPDVTRRNLTGAVNALIEKAGLRIIAQKRVLITKAQAETFYAVHSARPFFGELVESMISGPVVVQVLEGEDAIKKYREVLGATDPAKADAGTIRKEFALSVGENSAHGSDAPETAAVEIAQWFAGNELVG.

Lys11, Phe59, Arg87, Thr93, Arg104, and Asn114 together coordinate ATP. The active-site Pros-phosphohistidine intermediate is His117.

The protein belongs to the NDK family. As to quaternary structure, homotetramer. Mg(2+) is required as a cofactor.

It localises to the cytoplasm. The catalysed reaction is a 2'-deoxyribonucleoside 5'-diphosphate + ATP = a 2'-deoxyribonucleoside 5'-triphosphate + ADP. The enzyme catalyses a ribonucleoside 5'-diphosphate + ATP = a ribonucleoside 5'-triphosphate + ADP. Major role in the synthesis of nucleoside triphosphates other than ATP. The ATP gamma phosphate is transferred to the NDP beta phosphate via a ping-pong mechanism, using a phosphorylated active-site intermediate. The chain is Nucleoside diphosphate kinase from Beijerinckia indica subsp. indica (strain ATCC 9039 / DSM 1715 / NCIMB 8712).